A 163-amino-acid chain; its full sequence is Nucleotide-binding protein BCG9842_B4128 (163 aa).

The protein belongs to the YajQ family.

In terms of biological role, nucleotide-binding protein. This chain is Nucleotide-binding protein BCG9842_B4128, found in Bacillus cereus (strain G9842).